A 175-amino-acid chain; its full sequence is Mating-type protein ALPHA1 (175 aa).

The alpha box DNA-binding region spans 88 to 144 (SSKKYLNSFMAFRAYYSQFGSGVKQNVLSSLLAEEWHADKMQHGIWDYFAQQYNFIN).

This sequence belongs to the MATALPHA1 family. In terms of assembly, binds DNA with a high specificity in complex with an MCM1 dimer. Interacts with STE12.

The protein resides in the nucleus. Functionally, mating type proteins are sequence specific DNA-binding proteins that act as master switches in yeast differentiation by controlling gene expression in a cell type-specific fashion. Transcriptional coactivator that, in alpha-cells, binds cooperatively with MCM1 and STE12 to a DNA sequence termed the QP' element, to activate the transcription of alpha-specific genes. In Saccharomyces cerevisiae (strain ATCC 204508 / S288c) (Baker's yeast), this protein is Mating-type protein ALPHA1 (MATALPHA1).